Consider the following 395-residue polypeptide: MLGRSRLTFVLLSVTVTCSVAQHVPPWTEDCRKSTYPPSGPTYRGPVPWYTINLDLPPYKRWHELMVDKAPALKVIVNYLKNMINAFEPSGKIVQLVDQKLPGLLGSFPGPFEEEMKGIAAVTEIPLGEIILFNIFYEFFTICTSIITEDKEGHLLHARNMDFGVFLGWNVNNNTWVVTEELKPLTVNLDFQRNSKTVFKAAGFAGYVGMLTGFKPGLFSLTLNERFSTNGGFMGVIEWILGKKDAKWIGFIIRSVLENSTSYEEAKTILTKSKILAPAYFILGGSKSGEGCVITRDRVQSLDIYELDPKQGIWYVVQTNYDRWKNPFFLDNRRTPAKMCLNRTTQENISFATMYDVLSTKPVLNKLTVYTALIDVTKGQFETYLRDCPDPCIGW.

The first 21 residues, 1 to 21 (MLGRSRLTFVLLSVTVTCSVA), serve as a signal peptide directing secretion. Cysteine 31 and cysteine 340 are disulfide-bonded. Cysteine 143 acts as the Nucleophile in catalysis. 4 N-linked (GlcNAc...) asparagine glycosylation sites follow: asparagine 173, asparagine 259, asparagine 342, and asparagine 348. Cysteine 388 and cysteine 392 are oxidised to a cystine.

This sequence belongs to the acid ceramidase family. Heterodimer; disulfide-linked. The heterodimer is composed of the disulfide-linked alpha and beta chains produced by autocatalytic cleavage of the precursor. N-glycosylated. In terms of processing, proteolytically cleaved into two chains alpha and beta that remain associated via a disulfide bond. Cleavage gives rise to a conformation change that activates the enzyme. The same catalytic Cys residue mediates the autoproteolytic cleavage and subsequent hydrolysis of lipid substrates. The beta chain may undergo an additional C-terminal processing.

The protein resides in the lysosome. Its subcellular location is the secreted. The catalysed reaction is an N-acylsphing-4-enine + H2O = sphing-4-enine + a fatty acid. It carries out the reaction N-dodecanoylsphing-4-enine + H2O = dodecanoate + sphing-4-enine. The enzyme catalyses N-tetradecanoylsphing-4-enine + H2O = tetradecanoate + sphing-4-enine. It catalyses the reaction N-hexadecanoylsphing-4-enine + H2O = sphing-4-enine + hexadecanoate. The catalysed reaction is N-octadecanoylsphing-4-enine + H2O = sphing-4-enine + octadecanoate. It carries out the reaction N-dodecanoyl-(4R)-hydroxysphinganine + H2O = (4R)-hydroxysphinganine + dodecanoate. The enzyme catalyses N-(dodecanoyl)-sphinganine + H2O = dodecanoate + sphinganine. It catalyses the reaction N-(acetyl)-sphing-4-enine + H2O = sphing-4-enine + acetate. The catalysed reaction is N-(hexanoyl)sphing-4-enine + H2O = hexanoate + sphing-4-enine. It carries out the reaction N-octanoylsphing-4-enine + H2O = octanoate + sphing-4-enine. The enzyme catalyses N-(9Z-octadecenoyl)-sphing-4-enine + H2O = sphing-4-enine + (9Z)-octadecenoate. It catalyses the reaction N-dodecanoylethanolamine + H2O = dodecanoate + ethanolamine. It participates in lipid metabolism; sphingolipid metabolism. In terms of biological role, lysosomal ceramidase that hydrolyzes sphingolipid ceramides into sphingosine and free fatty acids at acidic pH. Ceramides, sphingosine, and its phosphorylated form sphingosine-1-phosphate are bioactive lipids that mediate cellular signaling pathways regulating several biological processes including cell proliferation, apoptosis and differentiation. Has a higher catalytic efficiency towards C12-ceramides versus other ceramides. Also catalyzes the reverse reaction allowing the synthesis of ceramides from fatty acids and sphingosine. For the reverse synthetic reaction, the natural sphingosine D-erythro isomer is more efficiently utilized as a substrate compared to D-erythro-dihydrosphingosine and D-erythro-phytosphingosine, while the fatty acids with chain lengths of 12 or 14 carbons are the most efficiently used. Also has an N-acylethanolamine hydrolase activity. By regulating the levels of ceramides, sphingosine and sphingosine-1-phosphate in the epidermis, mediates the calcium-induced differentiation of epidermal keratinocytes. Also indirectly regulates tumor necrosis factor/TNF-induced apoptosis. By regulating the intracellular balance between ceramides and sphingosine, in adrenocortical cells, probably also acts as a regulator of steroidogenesis. The chain is Acid ceramidase from Balaenoptera acutorostrata scammoni (North Pacific minke whale).